Here is a 92-residue protein sequence, read N- to C-terminus: Small ribosomal subunit protein uS19 (92 aa).

The protein belongs to the universal ribosomal protein uS19 family.

In terms of biological role, protein S19 forms a complex with S13 that binds strongly to the 16S ribosomal RNA. The chain is Small ribosomal subunit protein uS19 from Rhodopseudomonas palustris (strain BisB18).